The chain runs to 152 residues: Small ribosomal subunit protein bS16 (152 aa).

Residues 118-130 (AEKHKAKASEKKA) are compositionally biased toward basic and acidic residues. Positions 118 to 152 (AEKHKAKASEKKAAAAASADEAGSAAADDAEGSES) are disordered. The segment covering 131 to 144 (AAAASADEAGSAAA) has biased composition (low complexity).

This sequence belongs to the bacterial ribosomal protein bS16 family.

This chain is Small ribosomal subunit protein bS16, found in Beutenbergia cavernae (strain ATCC BAA-8 / DSM 12333 / CCUG 43141 / JCM 11478 / NBRC 16432 / NCIMB 13614 / HKI 0122).